Here is a 597-residue protein sequence, read N- to C-terminus: Ran-binding protein 9 (597 aa).

Residues 29 to 216 (LNQRLRRLYP…VDANFGQHPF (188 aa)) enclose the B30.2/SPRY domain. The LisH domain occupies 247–279 (WQAMIQKMVASYLVHHSYCATAEAFAKSTDQAV). The 58-residue stretch at 285-342 (SIKNRQKIQKLVLSGRMGEAIETTQQLYPSLLERNPDLLFMLKVRQFIEMVNGTDSEV) folds into the CTLH domain. Disordered stretches follow at residues 343-375 (RCLG…SSQA), 389-417 (SSSK…VLNG), and 437-475 (SNGV…QSKR). The segment covering 438-456 (NGVSESSSNGFLNGSSTHG) has biased composition (polar residues). The segment covering 459-468 (QEDCDADMEV) has biased composition (acidic residues).

The protein belongs to the RANBP9/10 family. As to quaternary structure, identified in the CTLH complex that contains at least MAEA, RMND5A (or alternatively its paralog RMND5B), GID8, WDR26, and RANBP9 and/or RANBP10.

The protein localises to the cytoplasm. The protein resides in the cell membrane. It localises to the nucleus. Functionally, may act as scaffolding protein, and as adapter protein to couple membrane receptors to intracellular signaling pathways. Acts as a mediator of cell spreading and actin cytoskeleton rearrangement. Core component of the CTLH E3 ubiquitin-protein ligase complex that mediates ubiquitination and subsequent proteasomal degradation of target proteins. The sequence is that of Ran-binding protein 9 (ranbp9) from Danio rerio (Zebrafish).